A 94-amino-acid polypeptide reads, in one-letter code: Defensin-like protein 21 (94 aa).

The N-terminal stretch at Met-1–Gly-26 is a signal peptide. Cystine bridges form between Cys-41–Cys-92, Cys-51–Cys-79, Cys-65–Cys-88, and Cys-69–Cys-90.

This sequence belongs to the DEFL family.

The protein localises to the secreted. This chain is Defensin-like protein 21, found in Arabidopsis thaliana (Mouse-ear cress).